The following is a 291-amino-acid chain: Serine hydrolase BPHL (291 aa).

An N-terminal signal peptide occupies residues Met-1 to Thr-37. Positions Ala-62–Ser-173 constitute an AB hydrolase-1 domain. At Lys-74 the chain carries N6-acetyllysine; alternate. At Lys-74 the chain carries N6-succinyllysine; alternate. N6-acetyllysine occurs at positions 86 and 119. Position 126 is an N6-acetyllysine; alternate (Lys-126). Lys-126 is modified (N6-succinyllysine; alternate). Ser-139 (nucleophile) is an active-site residue. Position 184 is an N6-succinyllysine (Lys-184). Lys-191 carries the N6-acetyllysine; alternate modification. Lys-191 carries the N6-succinyllysine; alternate modification. Residue Lys-217 is modified to N6-acetyllysine. Glu-221 is a Mg(2+) binding site. Position 243 is an N6-acetyllysine (Lys-243). Asp-244 functions as the Charge relay system in the catalytic mechanism. N6-acetyllysine; alternate is present on residues Lys-260 and Lys-271. Lys-260 and Lys-271 each carry N6-succinyllysine; alternate. His-272 (charge relay system) is an active-site residue.

This sequence belongs to the AB hydrolase superfamily. Lipase family. Monomer. May also form homodimers.

Its subcellular location is the mitochondrion. The catalysed reaction is L-homocysteine thiolactone + H2O = L-homocysteine + H(+). It catalyses the reaction valacyclovir + H2O = acyclovir + L-valine + H(+). In terms of biological role, specific alpha-amino acid ester serine hydrolase that prefers small, hydrophobic, and aromatic side chains and does not have a stringent requirement for the leaving group other than preferring a primary alcohol. Has homocysteine-thiolactonase activity (in vitro) and may play a significant role in the detoxification of homocysteine thiolactone in vivo. Catalyzes the hydrolytic activation of amino acid ester prodrugs of nucleoside analogs such as valacyclovir and valganciclovir, converting them into their active forms (acyclovir and ganciclovir). This Mus musculus (Mouse) protein is Serine hydrolase BPHL (Bphl).